Reading from the N-terminus, the 388-residue chain is Galactokinase (388 aa).

Substrate is bound at residue 33-36 (EHTD). ATP contacts are provided by residues Ser67 and 124 to 130 (GAGLSSS). Residues Ser130 and Glu162 each coordinate Mg(2+). Residue Asp174 is the Proton acceptor of the active site. Tyr224 contacts substrate.

This sequence belongs to the GHMP kinase family. GalK subfamily.

The protein resides in the cytoplasm. It carries out the reaction alpha-D-galactose + ATP = alpha-D-galactose 1-phosphate + ADP + H(+). The protein operates within carbohydrate metabolism; galactose metabolism. Functionally, catalyzes the transfer of the gamma-phosphate of ATP to D-galactose to form alpha-D-galactose-1-phosphate (Gal-1-P). The sequence is that of Galactokinase from Lacticaseibacillus paracasei (strain ATCC 334 / BCRC 17002 / CCUG 31169 / CIP 107868 / KCTC 3260 / NRRL B-441) (Lactobacillus paracasei).